The chain runs to 267 residues: Ribosomal RNA small subunit methyltransferase NEP1 (267 aa).

The segment at 1–46 (MSELKNGTTEPKKNETTQSDSKSKSTSTNKSSVPPASLVPVQPTAL) is disordered. Residues 16-32 (TTQSDSKSKSTSTNKSS) show a composition bias toward low complexity. S-adenosyl-L-methionine contacts are provided by residues leucine 195, glycine 222, 227-229 (GKD), and 242-247 (LSDYPL).

Belongs to the class IV-like SAM-binding methyltransferase superfamily. RNA methyltransferase NEP1 family. Homodimer.

Its subcellular location is the nucleus. The protein resides in the nucleolus. The enzyme catalyses a pseudouridine in rRNA + S-adenosyl-L-methionine = an N(1)-methylpseudouridine in rRNA + S-adenosyl-L-homocysteine + H(+). Its function is as follows. S-adenosyl-L-methionine-dependent pseudouridine N(1)-methyltransferase that methylates the pseudouridine corresponding to position 1189 (Psi1189) in S.cerevisiae 18S rRNA. Involved the biosynthesis of the hypermodified N1-methyl-N3-(3-amino-3-carboxypropyl) pseudouridine (m1acp3-Psi) conserved in eukaryotic 18S rRNA. Also has an essential role in 40S ribosomal subunit biogenesis independent on its methyltransferase activity, facilitating the incorporation of ribosomal protein S19 during the formation of pre-ribosomes. The sequence is that of Ribosomal RNA small subunit methyltransferase NEP1 from Candida albicans (Yeast).